A 1113-amino-acid polypeptide reads, in one-letter code: MVMAQQQKNAERNDEHTRRNRSPSVDSVSRVQQQSGGFAFYNQQSNHQYQQSHPRRTSFSRDGNTGYYNNHSGNKRQTYNNQRGGRSYNHRGNSNYQQNGEYSGNQGCVPKYHQRNQNYPQLQPKYSYFQPHQRPIFNSTQGYGTYSVRRSSPPSPSALSSSTANSTSNRAPTQPPILLRHAEPASDKNHQGSDHEQNHDPKIHLYRSAGTAPGGYTQCPSPYKQPPPQPPSTPSSSDKRIEQQQAEDWPTRFQHPPPQFRRGQDPMPASIELQHKTANQTMPVDIVQTNQQKTVSSYERAAQFRASASELPTDSVDAKHPCFANERMQSALIGISPQLKTQQQSPGIPIQNEAEASAVMKAMRSFQFHNWPQMSHGSYYPMPYHLENQMRPMKSGDQLPLNQQNHNLSGFPAFVGKSSLVGSSLNTRNSSEADPEEMPRIMEKLDDEVTGADHDKTIDENRRRIHKSQEPRIGTEEKALNELPRKANRRNSSCSSISSVSESSSPSALDESTLTKILPTDNFRGGRGFASPSPPTSLLSEPLSRMDVLSEKIWDYHNKVSQTDEMLQRKLHLRDMLYTAISPVFPLSGLYVVGSSLNGFGNNSSDMDLCLMITNKDLDQKNDAVVVLNLILSTLQYEKFVESQKLILAKVPILRINFAAPFDDITVDLNANNSVAIRNTHLLCYYSSYDWRVRPLVSVVKEWAKRKGINDANKSSFTSYSLVLMVIHFLQCGPTKVLPNLQQSYPNRFSNKVDVRTLNVTMALEEVADDIDQSLSEKTTLGELLIGFLDYYANEFNYDRDAISIRQGRRVERAALAVRPKIHSNSEGDKETPPPSSSASTSSIHNGGTPGIPMHHSISNPHFWRSQWRCVCIEEPFTNSNTAHSIYDEMVFEAIKKAFREAHGELQHNHDLDKLMECEPIKASTTNTGAAVFAATYEGERPLAQQPNTIACASLRVLNSIPVSSGPGHYHYQQQSNQNLSRPQRPGSNQGYQMNNNRGFNGNNQQQHQNRRSFNNQSSSNPGNGSTGPRSSRSNENVRDSSRQQNSQKGSSGVSVSKENVASTTGVPVDKKQQNSNRKDDGNRTKRSPMVQSPEPAKTKSEKTPMASSNVSQ.

Disordered regions lie at residues 1-113 (MVMA…PKYH), 134-175 (RPIF…PTQP), 205-266 (LYRS…GQDP), and 445-513 (LDDE…DEST). The segment covering 22–52 (SPSVDSVSRVQQQSGGFAFYNQQSNHQYQQS) has biased composition (low complexity). The segment covering 60–106 (SRDGNTGYYNNHSGNKRQTYNNQRGGRSYNHRGNSNYQQNGEYSGNQ) has biased composition (polar residues). Over residues 149–172 (RRSSPPSPSALSSSTANSTSNRAP) the composition is skewed to low complexity. The span at 223-233 (YKQPPPQPPST) shows a compositional bias: pro residues. Residues 451–485 (GADHDKTIDENRRRIHKSQEPRIGTEEKALNELPR) are compositionally biased toward basic and acidic residues. Positions 492–507 (SSCSSISSVSESSSPS) are enriched in low complexity. Mg(2+) is bound by residues aspartate 606 and aspartate 608. Positions 780–816 (TLGELLIGFLDYYANEFNYDRDAISIRQGRRVERAAL) constitute a PAP-associated domain. Disordered stretches follow at residues 817-854 (AVRP…GIPM) and 966-1113 (GPGH…NVSQ). Positions 972–994 (YQQQSNQNLSRPQRPGSNQGYQM) are enriched in polar residues. Low complexity-rich tracts occupy residues 995-1035 (NNNR…SRSN) and 1044-1061 (QQNS…KENV). Basic and acidic residues predominate over residues 1069-1084 (VDKKQQNSNRKDDGNR).

Belongs to the DNA polymerase type-B-like family. GLD2 subfamily. Interacts with gld-3. Mg(2+) is required as a cofactor. Mn(2+) serves as cofactor. In terms of tissue distribution, germline-specific.

The protein localises to the cytoplasm. The enzyme catalyses RNA(n) + ATP = RNA(n)-3'-adenine ribonucleotide + diphosphate. Functionally, cytoplasmic poly(A) RNA polymerase that adds successive AMP monomers to the 3'-end of specific RNAs, forming a poly(A) tail. Acts as a regulator of mitosis/meiosis required for progression through meiotic prophase during oogenesis and spermatogenesis and for promotion of the entry into meiosis from the mitotic cell cycle. May act by regulating and activating gld-1 mRNA activity in germline. Required for polyadenylation of neg-1 mRNA during embryogenesis. This Caenorhabditis elegans protein is Poly(A) RNA polymerase gld-2 (gld-2).